A 146-amino-acid polypeptide reads, in one-letter code: Hemoglobin subunit beta (146 aa).

The Globin domain maps to 2–146; the sequence is FLTPEENGHV…VANALAHKYH (145 aa). Thr-12 bears the Phosphothreonine mark. Ser-44 bears the Phosphoserine mark. Position 59 is an N6-acetyllysine (Lys-59). Position 63 (His-63) interacts with heme b. Lys-82 bears the N6-acetyllysine mark. His-92 contacts heme b. The residue at position 93 (Cys-93) is an S-nitrosocysteine. An N6-acetyllysine modification is found at Lys-144.

The protein belongs to the globin family. As to quaternary structure, heterotetramer of two alpha chains and two beta chains. In terms of tissue distribution, red blood cells.

In terms of biological role, involved in oxygen transport from the lung to the various peripheral tissues. The sequence is that of Hemoglobin subunit beta (HBB) from Hapalemur griseus (Gray gentle lemur).